The sequence spans 274 residues: Formamidopyrimidine-DNA glycosylase (274 aa).

Residue Pro-2 is the Schiff-base intermediate with DNA of the active site. Catalysis depends on Glu-3, which acts as the Proton donor. Lys-60 acts as the Proton donor; for beta-elimination activity in catalysis. 2 residues coordinate DNA: His-93 and Arg-112. The FPG-type zinc-finger motif lies at 240 to 274 (DVYGRKGETCRQCGTPITKTVVGGRGTHFCSVCQK). The Proton donor; for delta-elimination activity role is filled by Arg-264.

It belongs to the FPG family. In terms of assembly, monomer. Requires Zn(2+) as cofactor.

It catalyses the reaction Hydrolysis of DNA containing ring-opened 7-methylguanine residues, releasing 2,6-diamino-4-hydroxy-5-(N-methyl)formamidopyrimidine.. The catalysed reaction is 2'-deoxyribonucleotide-(2'-deoxyribose 5'-phosphate)-2'-deoxyribonucleotide-DNA = a 3'-end 2'-deoxyribonucleotide-(2,3-dehydro-2,3-deoxyribose 5'-phosphate)-DNA + a 5'-end 5'-phospho-2'-deoxyribonucleoside-DNA + H(+). In terms of biological role, involved in base excision repair of DNA damaged by oxidation or by mutagenic agents. Acts as a DNA glycosylase that recognizes and removes damaged bases. Has a preference for oxidized purines, such as 7,8-dihydro-8-oxoguanine (8-oxoG). Has AP (apurinic/apyrimidinic) lyase activity and introduces nicks in the DNA strand. Cleaves the DNA backbone by beta-delta elimination to generate a single-strand break at the site of the removed base with both 3'- and 5'-phosphates. The protein is Formamidopyrimidine-DNA glycosylase (mutM) of Halalkalibacterium halodurans (strain ATCC BAA-125 / DSM 18197 / FERM 7344 / JCM 9153 / C-125) (Bacillus halodurans).